A 279-amino-acid polypeptide reads, in one-letter code: Replication factor A protein 2 (279 aa).

Residues 26 to 47 form a disordered region; it reads GAGFNEYDQSSQPSVDRQQGAG. A compositionally biased stretch (polar residues) spans 32-46; it reads YDQSSQPSVDRQQGA. Positions 80-140 form a DNA-binding region, OB; the sequence is VTFVGVLRNI…GNIKIFSGKI (61 aa).

It belongs to the replication factor A protein 2 family. As to quaternary structure, heterotrimer of 68, 30, and 12 kDa chains. In terms of processing, phosphorylated in a cell cycle-dependent manner. Hypophosphorylated in G1, becomes phosphorylated at the G1/S boundary, it is maintained in this state through the M phase.

It is found in the nucleus. In terms of biological role, binds to single-stranded sequences. This is Replication factor A protein 2 (ssb2) from Schizosaccharomyces pombe (strain 972 / ATCC 24843) (Fission yeast).